Here is a 212-residue protein sequence, read N- to C-terminus: MNYPVEWRISDSPVDYPQAIAAMEERVAAIRAGTAPELVWLLEHPPLYSAGTSADPRDLVDPGRFPVYETGRGGQYTYHGPGQRVAYVLLDLKRRGADVRVYVCNLEEWLIRTLARFVVKGERRTGRVGIWVDRGGGREDKIAAIGVRVRHWVTFHGIALNVDPDLSHFEGIVPCGIREHGVTSLWDLGLTPTMDDVDCALMATFPEVFGAD.

Residues 33 to 212 (GTAPELVWLL…ATFPEVFGAD (180 aa)) form the BPL/LPL catalytic domain. Substrate-binding positions include 72-79 (RGGQYTYH), 144-146 (AIG), and 157-159 (GIA). C175 acts as the Acyl-thioester intermediate in catalysis.

The protein belongs to the LipB family.

Its subcellular location is the cytoplasm. The catalysed reaction is octanoyl-[ACP] + L-lysyl-[protein] = N(6)-octanoyl-L-lysyl-[protein] + holo-[ACP] + H(+). It participates in protein modification; protein lipoylation via endogenous pathway; protein N(6)-(lipoyl)lysine from octanoyl-[acyl-carrier-protein]: step 1/2. In terms of biological role, catalyzes the transfer of endogenously produced octanoic acid from octanoyl-acyl-carrier-protein onto the lipoyl domains of lipoate-dependent enzymes. Lipoyl-ACP can also act as a substrate although octanoyl-ACP is likely to be the physiological substrate. The chain is Octanoyltransferase from Paramagnetospirillum magneticum (strain ATCC 700264 / AMB-1) (Magnetospirillum magneticum).